Here is a 133-residue protein sequence, read N- to C-terminus: Ribosome-binding factor A (133 aa).

It belongs to the RbfA family. In terms of assembly, monomer. Binds 30S ribosomal subunits, but not 50S ribosomal subunits or 70S ribosomes.

It localises to the cytoplasm. Functionally, one of several proteins that assist in the late maturation steps of the functional core of the 30S ribosomal subunit. Associates with free 30S ribosomal subunits (but not with 30S subunits that are part of 70S ribosomes or polysomes). Required for efficient processing of 16S rRNA. May interact with the 5'-terminal helix region of 16S rRNA. The protein is Ribosome-binding factor A of Alteromonas mediterranea (strain DSM 17117 / CIP 110805 / LMG 28347 / Deep ecotype).